A 272-amino-acid polypeptide reads, in one-letter code: Aquaporin FA-CHIP (272 aa).

At 1–17 (MASEFKKKAFWRAVIAE) the chain is on the cytoplasmic side. A helical membrane pass occupies residues 18–35 (FLAMILFVFISIGAALGF). Residues 36 to 52 (NFPIEEKANQTVGRSQD) are Extracellular-facing. N44 carries N-linked (GlcNAc...) asparagine glycosylation. A helical membrane pass occupies residues 53 to 71 (IVKVSLAFGISIATMAQSV). The Cytoplasmic segment spans residues 72 to 97 (GHVSGAHLNPAVTLGCLLSCQISILK). The short motif at 80-82 (NPA) is the NPA 1 element. Residues 98-119 (AVMYIIAQCLGAVVATAILSGI) form a helical membrane-spanning segment. Residues 120–139 (TSGLENNSLGLNGLSPGVSA) are Extracellular-facing. N-linked (GlcNAc...) asparagine glycosylation occurs at N125. The chain crosses the membrane as a helical span at residues 140–160 (GQGLGVEILVTFQLVLCVVAV). At 161-168 (TDRRRHDV) the chain is on the cytoplasmic side. The helical transmembrane segment at 169–188 (SGSVPLAIGLSVALGHLIAI) threads the bilayer. Topologically, residues 189 to 214 (DYTGCGMNPARSFGSAVLTKNFTYHW) are extracellular. An NPA 2 motif is present at residues 196–198 (NPA). An N-linked (GlcNAc...) asparagine glycan is attached at N209. A helical transmembrane segment spans residues 215–236 (IFWVGPMIGGAAAAIIYDFILA). At 237 to 272 (PRTSDLTDRMKVWTNGQVEEYELDGDDNTRVEMKPK) the chain is on the cytoplasmic side.

Belongs to the MIP/aquaporin (TC 1.A.8) family.

The protein resides in the membrane. Its function is as follows. Forms a water-specific channel. The chain is Aquaporin FA-CHIP (AQPA) from Pelophylax lessonae (Pool frog).